The following is a 271-amino-acid chain: Formamidopyrimidine-DNA glycosylase (271 aa).

Catalysis depends on Pro-2, which acts as the Schiff-base intermediate with DNA. Glu-3 functions as the Proton donor in the catalytic mechanism. Lys-58 functions as the Proton donor; for beta-elimination activity in the catalytic mechanism. DNA contacts are provided by His-91, Arg-110, and Arg-152. Residues Asn-237 to Lys-271 form an FPG-type zinc finger. Residue Arg-261 is the Proton donor; for delta-elimination activity of the active site.

Belongs to the FPG family. As to quaternary structure, monomer. The cofactor is Zn(2+).

The enzyme catalyses Hydrolysis of DNA containing ring-opened 7-methylguanine residues, releasing 2,6-diamino-4-hydroxy-5-(N-methyl)formamidopyrimidine.. It catalyses the reaction 2'-deoxyribonucleotide-(2'-deoxyribose 5'-phosphate)-2'-deoxyribonucleotide-DNA = a 3'-end 2'-deoxyribonucleotide-(2,3-dehydro-2,3-deoxyribose 5'-phosphate)-DNA + a 5'-end 5'-phospho-2'-deoxyribonucleoside-DNA + H(+). Its function is as follows. Involved in base excision repair of DNA damaged by oxidation or by mutagenic agents. Acts as a DNA glycosylase that recognizes and removes damaged bases. Has a preference for oxidized purines, such as 7,8-dihydro-8-oxoguanine (8-oxoG). Has AP (apurinic/apyrimidinic) lyase activity and introduces nicks in the DNA strand. Cleaves the DNA backbone by beta-delta elimination to generate a single-strand break at the site of the removed base with both 3'- and 5'-phosphates. The chain is Formamidopyrimidine-DNA glycosylase from Saccharophagus degradans (strain 2-40 / ATCC 43961 / DSM 17024).